A 407-amino-acid chain; its full sequence is tRNA (uracil(54)-C(5))-methyltransferase (407 aa).

The [4Fe-4S] cluster site is built by cysteine 61, cysteine 67, cysteine 70, and cysteine 137. S-adenosyl-L-methionine-binding positions include glutamine 253, tyrosine 279, threonine 284, 300–301 (DS), aspartate 327, and aspartate 341. The active-site Nucleophile is cysteine 368. Glutamate 400 (proton acceptor) is an active-site residue.

The protein belongs to the class I-like SAM-binding methyltransferase superfamily. RNA M5U methyltransferase family.

The catalysed reaction is uridine(54) in tRNA + S-adenosyl-L-methionine = 5-methyluridine(54) in tRNA + S-adenosyl-L-homocysteine + H(+). Its function is as follows. Catalyzes the formation of 5-methyl-uridine at position 54 (m5U54) in tRNA. The polypeptide is tRNA (uracil(54)-C(5))-methyltransferase (Pyrococcus horikoshii (strain ATCC 700860 / DSM 12428 / JCM 9974 / NBRC 100139 / OT-3)).